The sequence spans 582 residues: DNA mismatch repair protein MutL (582 aa).

This sequence belongs to the DNA mismatch repair MutL/HexB family.

Functionally, this protein is involved in the repair of mismatches in DNA. It is required for dam-dependent methyl-directed DNA mismatch repair. May act as a 'molecular matchmaker', a protein that promotes the formation of a stable complex between two or more DNA-binding proteins in an ATP-dependent manner without itself being part of a final effector complex. The chain is DNA mismatch repair protein MutL from Buchnera aphidicola subsp. Schizaphis graminum (strain Sg).